Reading from the N-terminus, the 786-residue chain is Cyclin-F (786 aa).

The Nuclear localization signal 1 motif lies at 20 to 28 (KRRIRRRPR). The 48-residue stretch at 29 to 76 (NLTILSLPEDVLFHILKWLSVEDILAVRAVHSQLKDLVDNHASVWACA) folds into the F-box domain. The Cyclin N-terminal domain occupies 288-405 (QASQAVSKQQ…EIVSALEGKI (118 aa)). 4 consecutive short sequence motifs (d box) follow at residues 310 to 313 (RYIL), 343 to 346 (RRRL), 349 to 352 (RYRL), and 351 to 354 (RLQL). Disordered stretches follow at residues 564–593 (SPSGRRTKRKRENSLQEDRGSFVTTPTAEL) and 675–738 (TQIP…HTQP). A Nuclear localization signal 2 motif is present at residues 568–574 (RRTKRKR). The interval 582–766 (RGSFVTTPTA…ESSVPQQQVK (185 aa)) is PEST. Residues 697-714 (VTTSGYSSVSTASPTSSV) are compositionally biased toward low complexity. Residues 723–738 (QPTSVLSLDSDSHTQP) show a composition bias toward polar residues. The D box 5 motif lies at 767 to 770 (RINL).

Belongs to the cyclin family. Cyclin AB subfamily. As to quaternary structure, component of the SCF(CCNF) complex consisting of CUL1, RBX1, SKP1 and CCNF. Interacts with SKP1. Interacts with CUL1. Interacts with CCNB1; interaction is required for nuclear localization of CCNB1. Interacts with CCP110; this interaction leads to CCP110 ubiquitination and degradation via the proteasome pathway. Interacts (via the Cyclin N-terminal domain) with MYBL2/BMYB. Interacts with FZR1/CDH1 (via N-terminus). Interacts with RRM2 (via Cy motif and when phosphorylated at 'Thr-33'); the interaction occurs exclusively in G2 and early M. Interacts with CDC6 (via Cy motif); the interaction takes place during G2 and M phase. In terms of processing, degraded when the spindle assembly checkpoint is activated during the G2-M transition. Degradation depends on the C-terminal PEST sequence. Post-translationally, phosphorylated just before cells enter into mitosis. Ubiquitinated by the anaphase-promoting complex (APC/C); leading to its degradation by the proteasome. As to expression, widely expressed, with expression detected in the heart, brain, placenta, lung, liver, skeletal muscle, kidney and pancreas.

Its subcellular location is the nucleus. It localises to the cytoplasm. The protein localises to the perinuclear region. The protein resides in the cytoskeleton. It is found in the microtubule organizing center. Its subcellular location is the centrosome. It localises to the centriole. Substrate recognition component of a SCF (SKP1-CUL1-F-box protein) E3 ubiquitin-protein ligase complex which mediates the ubiquitination and subsequent proteasomal degradation of target proteins. The SCF(CCNF) E3 ubiquitin-protein ligase complex is an integral component of the ubiquitin proteasome system (UPS) and links proteasome degradation to the cell cycle. Mediates the substrate recognition and the proteasomal degradation of various target proteins involved in the regulation of cell cycle progression and in the maintenance of genome stability. Mediates the ubiquitination and proteasomal degradation of CP110 during G2 phase, thereby acting as an inhibitor of centrosome reduplication. In G2, mediates the ubiquitination and subsequent degradation of ribonucleotide reductase RRM2, thereby maintaining a balanced pool of dNTPs and genome integrity. In G2, mediates the ubiquitination and proteasomal degradation of CDC6, thereby suppressing DNA re-replication and preventing genome instability. Involved in the ubiquitination and degradation of the substrate adapter CDH1 of the anaphase-promoting complex (APC/C), thereby acting as an antagonist of APC/C in regulating G1 progression and S phase entry. May play a role in the G2 cell cycle checkpoint control after DNA damage, possibly by promoting the ubiquitination of MYBL2/BMYB. This Homo sapiens (Human) protein is Cyclin-F (CCNF).